Here is a 250-residue protein sequence, read N- to C-terminus: Probable transcriptional regulatory protein Nther_1800 (250 aa).

Belongs to the TACO1 family.

The protein resides in the cytoplasm. The polypeptide is Probable transcriptional regulatory protein Nther_1800 (Natranaerobius thermophilus (strain ATCC BAA-1301 / DSM 18059 / JW/NM-WN-LF)).